A 390-amino-acid chain; its full sequence is 23S rRNA (uracil(747)-C(5))-methyltransferase RlmC (390 aa).

Cys12, Cys20, Cys23, and Cys100 together coordinate [4Fe-4S] cluster. Residues Gln225, Phe254, Glu275, and Asn322 each coordinate S-adenosyl-L-methionine. Residue Cys349 is the Nucleophile of the active site.

Belongs to the class I-like SAM-binding methyltransferase superfamily. RNA M5U methyltransferase family. RlmC subfamily.

It carries out the reaction uridine(747) in 23S rRNA + S-adenosyl-L-methionine = 5-methyluridine(747) in 23S rRNA + S-adenosyl-L-homocysteine + H(+). Its function is as follows. Catalyzes the formation of 5-methyl-uridine at position 747 (m5U747) in 23S rRNA. The polypeptide is 23S rRNA (uracil(747)-C(5))-methyltransferase RlmC (Shewanella baltica (strain OS185)).